The sequence spans 124 residues: Small ribosomal subunit protein uS12c (124 aa).

This sequence belongs to the universal ribosomal protein uS12 family. As to quaternary structure, part of the 30S ribosomal subunit.

The protein localises to the plastid. With S4 and S5 plays an important role in translational accuracy. Located at the interface of the 30S and 50S subunits. This Helicosporidium sp. subsp. Simulium jonesii (Green alga) protein is Small ribosomal subunit protein uS12c (rps12).